A 63-amino-acid polypeptide reads, in one-letter code: Rubredoxin-2 (63 aa).

The Rubredoxin-like domain occupies 8–59 (YKLFRCLQCGFEYDEAIGWPDDGIEPGTRWDEIPEDWSCPDCGAAKVDFEMV). Fe cation is bound by residues cysteine 13, cysteine 16, cysteine 46, and cysteine 49.

This sequence belongs to the rubredoxin family. The cofactor is Fe(3+).

Its function is as follows. Involved in the hydrocarbon hydroxylating system, which transfers electrons from NADH to rubredoxin reductase and then through rubredoxin to alkane 1 monooxygenase. This chain is Rubredoxin-2 (rubA2), found in Rhodococcus erythropolis (Arthrobacter picolinophilus).